An 886-amino-acid polypeptide reads, in one-letter code: Valine--tRNA ligase (886 aa).

The 'HIGH' region motif lies at 53–63 (PNVTGSLHMGH). Positions 540–544 (KMSKS) match the 'KMSKS' region motif. Residue Lys543 coordinates ATP. Residues 820-851 (IDVAAERRRMEKDLAAAQKELASTAAKLANAD) are a coiled coil.

The protein belongs to the class-I aminoacyl-tRNA synthetase family. ValS type 1 subfamily. Monomer.

It localises to the cytoplasm. The enzyme catalyses tRNA(Val) + L-valine + ATP = L-valyl-tRNA(Val) + AMP + diphosphate. In terms of biological role, catalyzes the attachment of valine to tRNA(Val). As ValRS can inadvertently accommodate and process structurally similar amino acids such as threonine, to avoid such errors, it has a 'posttransfer' editing activity that hydrolyzes mischarged Thr-tRNA(Val) in a tRNA-dependent manner. The sequence is that of Valine--tRNA ligase from Mycobacterium leprae (strain TN).